The primary structure comprises 1390 residues: Bromodomain adjacent to zinc finger domain protein 2 (1390 aa).

Disordered stretches follow at residues 30–67 (AKIQKATASSPSKSTNGTSASTSAVPSTSGTSSSQNEA), 178–215 (AKKKPAGVASTSSASTSSSTPSTSSASITSSNNNAANN), and 235–269 (QKQQQQQKDTQKKADQAKKAKELAKQQQKEQDVKN). The segment covering 35–45 (ATASSPSKSTN) has biased composition (polar residues). 2 stretches are compositionally biased toward low complexity: residues 46 to 63 (GTSASTSAVPSTSGTSSS) and 186 to 215 (ASTSSASTSSSTPSTSSASITSSNNNAANN). Basic and acidic residues predominate over residues 243-269 (DTQKKADQAKKAKELAKQQQKEQDVKN). The 73-residue stretch at 323–395 (KTNEAMLRLP…DNFLFNTKLV (73 aa)) folds into the MBD domain. Residues 524-588 (SQGFADALMV…LRLALEFPGM (65 aa)) enclose the DDT domain. The span at 705-724 (KEEQNHESDSEPPTRPDTPK) shows a compositional bias: basic and acidic residues. Positions 705–729 (KEEQNHESDSEPPTRPDTPKKATVA) are disordered. The PHD-type zinc finger occupies 1100-1149 (EALCQICKSMDGDEMLVCDGCESGCHMECFRPRMTKVPEGDWFCQRCREE). A disordered region spans residues 1218 to 1241 (EERELEDDNHAENGENTKNGHMNG). In terms of domain architecture, Bromo spans 1273 to 1377 (LPKNMNKELC…KFFQKRWKQL (105 aa)).

The protein belongs to the WAL family. In terms of assembly, interacts with set-6. As to expression, broadly expressed in the nervous system, including head, body and tail neurons.

It is found in the nucleus. Its subcellular location is the chromosome. In terms of biological role, chromatin reader protein, involved in positively modulating the rate of age-related behavioral deterioration. Positively modulates the level of global trimethylated 'Lys-9' of histone H3 (H3K9me3), but not of H3K9me2 or H3K9me1. May repress the expression of mitochondrial function-related genes by occupying their promoter regions, working in concert with histone methyltransferase, set-6. Involved in modulation of the mitochondrial unfolded protein response (UPR). Negatively regulates expression of bas-1, a serotonin (5-HT) and dopamine synthesizing enzyme (DOPA decarboxylase), with aging. Negatively modulates levels of endogenous 5-HT and dopamine with aging. Involved in modulating longevity, probably as a result of enhanced stress resistance via mechanisms related to dietary restriction and mitochondrial function. The chain is Bromodomain adjacent to zinc finger domain protein 2 from Caenorhabditis elegans.